Here is a 361-residue protein sequence, read N- to C-terminus: MGRGGRRNPGRPRRGSLAFSPRKRASRPVPRIRSWPDEERVRVQGFAGYKAGMTHAIMIDDWPNSPTEGEEISVPVTILDAPPMYVAAIRAYAPTPDGYRCVTEAWAEIPEELEMDRVFTVPKDGEAGDLDKIEELVDEGIVEEIRVIVATQPKKAGVPKKKPDVMEYRIGGKDVRERFEYAVEILSEEIRAKDVFDEGEIVDVSAITKGKGFQGVVKRWGVTIQDRKTQRKQKGRHIGSIGPITPSRVRWTVPMAGQVGYHQRTEHNKRILKIGEDGEEVTPRGGFVNYGVVRGDYIMIHGTVPGPKKRLIRVRPAVRPPKNAPEGAPEILYISRTSQQGVRPKASEDEIVEQLGGPASA.

A compositionally biased stretch (basic residues) spans 1-14; the sequence is MGRGGRRNPGRPRR. 2 disordered regions span residues 1–33 and 337–361; these read MGRG…PRIR and TSQQ…PASA.

Belongs to the universal ribosomal protein uL3 family. As to quaternary structure, part of the 50S ribosomal subunit. Forms a cluster with proteins L14 and L24e.

In terms of biological role, one of the primary rRNA binding proteins, it binds directly near the 3'-end of the 23S rRNA, where it nucleates assembly of the 50S subunit. In Methanopyrus kandleri (strain AV19 / DSM 6324 / JCM 9639 / NBRC 100938), this protein is Large ribosomal subunit protein uL3.